The following is a 681-amino-acid chain: U3 small nucleolar ribonucleoprotein protein MPP10 (681 aa).

Phosphoserine occurs at positions 61, 120, and 139. A compositionally biased stretch (acidic residues) spans 105 to 147 (SLLPESEEQEREEDGSEIEADDKEDLEDLEEEEVSDMGNDDPE). 2 disordered regions span residues 105–202 (SLLP…IVDD) and 216–364 (NIEK…EKRQ). Positions 109 to 138 (ESEEQEREEDGSEIEADDKEDLEDLEEEEV) form a coiled coil. The segment covering 148-162 (MGERAENSSKSDLRK) has biased composition (basic and acidic residues). 3 positions are modified to phosphoserine: serine 163, serine 167, and serine 171. Residues 180 to 190 (LEQQSKVQNKG) are compositionally biased toward polar residues. 2 stretches are compositionally biased toward basic and acidic residues: residues 193 to 202 (KPREKSIVDD) and 216 to 226 (NIEKEEERKDD). Residues 205 to 239 (FKLSEMEAYLENIEKEEERKDDNDEEEEDIDFFED) adopt a coiled-coil conformation. Positions 227–247 (NDEEEEDIDFFEDIDSDEDEG) are enriched in acidic residues. Serine 242 is modified (phosphoserine). Positions 253 to 264 (KKLKSGKSSRNL) are enriched in basic residues. A phosphoserine mark is found at serine 275 and serine 289. Residues 280–290 (TNVHDDELDSN) show a composition bias toward basic and acidic residues. Coiled coils occupy residues 284–324 (DDEL…NKQH) and 348–382 (NVKK…LEKK). Acidic residues predominate over residues 291-318 (KEDDEIAEEEAEELSISETDEDDDLQEN). The span at 319 to 329 (EDNKQHKESLK) shows a compositional bias: basic and acidic residues. Lysine 350 participates in a covalent cross-link: Glycyl lysine isopeptide (Lys-Gly) (interchain with G-Cter in SUMO2). Residues 351 to 364 (KNSDEVKSSFEKRQ) are compositionally biased toward basic and acidic residues. Residues lysine 382 and lysine 394 each participate in a glycyl lysine isopeptide (Lys-Gly) (interchain with G-Cter in SUMO2) cross-link. The stretch at 469–490 (LAEIYEQEYIKLNQQKTAEEEN) forms a coiled coil. Lysine 555 is covalently cross-linked (Glycyl lysine isopeptide (Lys-Gly) (interchain with G-Cter in SUMO2)). Over residues 558-575 (NKAGDIKTAAEKTATDKK) the composition is skewed to basic and acidic residues. Residues 558–606 (NKAGDIKTAAEKTATDKKRERRKKKYQKRMKIKEKEKRRKLLEKSSVDQ) are disordered. The stretch at 574-604 (KKRERRKKKYQKRMKIKEKEKRRKLLEKSSV) forms a coiled coil. The span at 576 to 598 (RERRKKKYQKRMKIKEKEKRRKL) shows a compositional bias: basic residues. At lysine 609 the chain carries N6-acetyllysine. Residues lysine 632 and lysine 649 each participate in a glycyl lysine isopeptide (Lys-Gly) (interchain with G-Cter in SUMO2) cross-link. Residues 648–670 (SKLQDQVKMQINDAKKTEKKKKK) are a coiled coil. Residues 660-681 (DAKKTEKKKKKRQDISVHKLKL) form a disordered region. A compositionally biased stretch (basic and acidic residues) spans 672-681 (QDISVHKLKL).

This sequence belongs to the MPP10 family. As to quaternary structure, part of the small subunit (SSU) processome, composed of more than 70 proteins and the RNA chaperone small nucleolar RNA (snoRNA) U3. Component of a heterotrimeric complex containing IMP3, IMP4 and MPHOSPH10. Interacts with IMP3 and IMP4. In terms of processing, phosphorylated in M (mitotic) phase.

It localises to the nucleus. The protein resides in the nucleolus. The protein localises to the chromosome. In terms of biological role, component of the 60-80S U3 small nucleolar ribonucleoprotein (U3 snoRNP). Required for the early cleavages during pre-18S ribosomal RNA processing. Part of the small subunit (SSU) processome, first precursor of the small eukaryotic ribosomal subunit. During the assembly of the SSU processome in the nucleolus, many ribosome biogenesis factors, an RNA chaperone and ribosomal proteins associate with the nascent pre-rRNA and work in concert to generate RNA folding, modifications, rearrangements and cleavage as well as targeted degradation of pre-ribosomal RNA by the RNA exosome. The chain is U3 small nucleolar ribonucleoprotein protein MPP10 from Homo sapiens (Human).